Reading from the N-terminus, the 54-residue chain is SAALAGTIIAGASLGFQILDKVLGELGKVSRKIAIGVDNESIGSNTAWTXXXXW.

The segment at 3–12 (ALAGTIIAGA) is plays an important role in the hemolytic activity. The interval 11 to 30 (GASLGFQILDKVLGELGKVS) is N-terminal region.

It belongs to the actinoporin family. Sea anemone subfamily. As to quaternary structure, octamer or nonamer in membranes. Monomer in the soluble state.

It is found in the secreted. The protein localises to the nematocyst. It localises to the target cell membrane. Pore-forming protein that forms cations-selective hydrophilic pores of around 1 nm and causes cytolysis. Pore formation is a multi-step process that involves specific recognition of membrane sphingomyelin (but neither cholesterol nor phosphatidylcholine) using aromatic rich region and adjacent phosphocholine (POC) binding site, firm binding to the membrane (mainly driven by hydrophobic interactions) accompanied by the transfer of the N-terminal region to the lipid-water interface and finally pore formation after oligomerization of monomers. The protein is Hemolytic toxin of Heteractis magnifica (Magnificent sea anemone).